The primary structure comprises 274 residues: Bis(5'-nucleosyl)-tetraphosphatase, symmetrical (274 aa).

It belongs to the Ap4A hydrolase family.

The catalysed reaction is P(1),P(4)-bis(5'-adenosyl) tetraphosphate + H2O = 2 ADP + 2 H(+). In terms of biological role, hydrolyzes diadenosine 5',5'''-P1,P4-tetraphosphate to yield ADP. This Shewanella oneidensis (strain ATCC 700550 / JCM 31522 / CIP 106686 / LMG 19005 / NCIMB 14063 / MR-1) protein is Bis(5'-nucleosyl)-tetraphosphatase, symmetrical.